A 372-amino-acid polypeptide reads, in one-letter code: Cytochrome b (372 aa).

Transmembrane regions (helical) follow at residues 25-45 (FGSM…FLAI), 69-90 (WIIQ…YTHI), 105-125 (WLSG…GYVL), and 170-190 (FFAL…IHII). Positions 75 and 89 each coordinate heme b. Positions 174 and 188 each coordinate heme b. Residue histidine 193 participates in a ubiquinone binding. Transmembrane regions (helical) follow at residues 218–238 (YKDT…MSFM), 280–300 (LGGT…PFTH), 312–332 (LTQI…WSAT), and 339–358 (FIFI…IINP).

The protein belongs to the cytochrome b family. In terms of assembly, the cytochrome bc1 complex contains 3 respiratory subunits (MT-CYB, CYC1 and UQCRFS1), 2 core proteins (UQCRC1 and UQCRC2) and probably 6 low-molecular weight proteins. Heme b serves as cofactor.

It localises to the mitochondrion inner membrane. Its function is as follows. Component of the ubiquinol-cytochrome c reductase complex (complex III or cytochrome b-c1 complex) that is part of the mitochondrial respiratory chain. The b-c1 complex mediates electron transfer from ubiquinol to cytochrome c. Contributes to the generation of a proton gradient across the mitochondrial membrane that is then used for ATP synthesis. This Hydrophis semperi (Lake Taal snake) protein is Cytochrome b (MT-CYB).